The sequence spans 56 residues: MASKGGRDKIKLESTAGTGHFYTTTKNKRTKPEKMEIMKFDPVARKHVAYKETKIK.

Positions 1–12 (MASKGGRDKIKL) are enriched in basic and acidic residues. Residues 1–30 (MASKGGRDKIKLESTAGTGHFYTTTKNKRT) form a disordered region. Over residues 15 to 25 (TAGTGHFYTTT) the composition is skewed to polar residues.

It belongs to the bacterial ribosomal protein bL33 family.

The protein is Large ribosomal subunit protein bL33 of Ralstonia nicotianae (strain ATCC BAA-1114 / GMI1000) (Ralstonia solanacearum).